A 200-amino-acid chain; its full sequence is Recombination protein RecR (200 aa).

A C4-type zinc finger spans residues cysteine 57–cysteine 72. Residues glycine 81–proline 176 enclose the Toprim domain.

This sequence belongs to the RecR family.

May play a role in DNA repair. It seems to be involved in an RecBC-independent recombinational process of DNA repair. It may act with RecF and RecO. The protein is Recombination protein RecR of Aliivibrio salmonicida (strain LFI1238) (Vibrio salmonicida (strain LFI1238)).